The following is a 1216-amino-acid chain: MGVMAYPFLFCLLLVHFGLGAIGASREAPSRPDPPRERTLRAKQHAQQPARASASDPSAPWSRSTDGTILAQKLAEEVPMDVASYLYTGDSHKLKRANCSSRYELAGLPGKSPALASSHPSLHGALDTLTHATNFLNMMLQSNKSREQNLQDDLEWYQALVRSLLEGEPSISRAAITFSTESLSAPAPQVFLQATREESRILLQDLSSSAHHLANATLETEWFHGLRRKWRTHLHRRGSNQGPRGLGHSWRRRDGLSGDKSHVKWSPPYLECENGSYKPGWLVTLSAAFYGLQPNLVPEFRGVMKVDINLQKVDIDQCSSDGWFSGTHKCHLNNSECMPIKGLGFVLGAYQCICKAGFYHPRDFSFNNFQRRGPDHHFVESAKDVSEEVHVCLPCSEGCPYCADDSPCFVQEDKYLRLAIISFQALCMLLDFLSMLVVYRFRKAKSIRASGLILLETILFGSLLLYFPVVILYFEPSTFRCILLRWVRLLGFATVYGTVTLKLHRVLKVFLSRTAQRIPYMTGGRVMRMLAVILLVVFWFLVGWTSSVCQNLERHISLIGQGRTSDHLIFSMCLVERWDYMTAAAEFLFLLWGVYLCYAVRTVPSAFHEPRYMAVAVHNELIISAIFHTIRFVLASRLQSDWMLMLYFAHTHLTVTVTIGLLLIPKFSHSSNNPRDDIATEAYEDELDMGRSGSYLNSSINSAWSEHSLDPEDIRDELKKLYAQLEIYKRKKMITNNPHLQKKRCSKKGLGRSIMRRITEIPETVSRQCSKEDKDGGEHGSAKGSSAGRKNPQETAGGSGKPKEESLRSRVFSLKKSHSTYEHVREQPGGPGSPPAQSREEEEATDNSVLGSPVGANRPRPLQEDSQAVSTESVPLVCKSASAHNLSSEKKPGPTRTSVLQKSLSVIASAKEKTLGLAGKTQAACVEERAKAQKALPRERETNRKYSNSDNAETQDSAPPNSSHSEEPRKPQKLGIMKQQRANPTTANSDLSPGATHMKDNFDIGEVCPWEIYDLAPGPGPLESKVQKHVSIAASEMERNPTFSLKEKSHPKPKAADLCQQSNPKSVDKAEVCPWESQGQSLFEEEKYLMSKTQVPLGRAQGENSGQHCATGVCAGQCEELPPKAVASKVENENLNQLGEQEKKTSSSERNVPDSHNSSNNFQPPLMSRAEVCPWEFETPDKPNAERSVAFPASSALSANKIAGPRNEEVRLARKV.

The N-terminal stretch at 1–23 (MGVMAYPFLFCLLLVHFGLGAIG) is a signal peptide. The Extracellular portion of the chain corresponds to 24-417 (ASREAPSRPD…CFVQEDKYLR (394 aa)). The disordered stretch occupies residues 25–65 (SREAPSRPDPPRERTLRAKQHAQQPARASASDPSAPWSRST). The segment covering 28–40 (APSRPDPPRERTL) has biased composition (basic and acidic residues). Residues 46 to 64 (AQQPARASASDPSAPWSRS) are compositionally biased toward low complexity. Residues 85 to 281 (YLYTGDSHKL…CENGSYKPGW (197 aa)) are cache-like region. 2 N-linked (GlcNAc...) asparagine glycosylation sites follow: N98 and N143. A disulfide bridge links C99 with C272. 2 residues coordinate glycine: S172 and R173. A glycan (N-linked (GlcNAc...) asparagine) is linked at N215. E271 provides a ligand contact to glycine. The N-linked (GlcNAc...) asparagine glycan is linked to N274. Residue D307 coordinates glycine. N-linked (GlcNAc...) asparagine glycosylation is present at N333. Residues 418–439 (LAIISFQALCMLLDFLSMLVVY) traverse the membrane as a helical segment. Topologically, residues 440 to 451 (RFRKAKSIRASG) are cytoplasmic. Residues 452–474 (LILLETILFGSLLLYFPVVILYF) traverse the membrane as a helical segment. At 475–478 (EPST) the chain is on the extracellular side. Residues 479-501 (FRCILLRWVRLLGFATVYGTVTL) traverse the membrane as a helical segment. C481 and C573 are oxidised to a cystine. The Cytoplasmic segment spans residues 502–525 (KLHRVLKVFLSRTAQRIPYMTGGR). Residues 526 to 547 (VMRMLAVILLVVFWFLVGWTSS) form a helical membrane-spanning segment. Residues 548 to 576 (VCQNLERHISLIGQGRTSDHLIFSMCLVE) lie on the Extracellular side of the membrane. A helical membrane pass occupies residues 577–597 (RWDYMTAAAEFLFLLWGVYLC). The Cytoplasmic portion of the chain corresponds to 598 to 611 (YAVRTVPSAFHEPR). The chain crosses the membrane as a helical span at residues 612–633 (YMAVAVHNELIISAIFHTIRFV). At 634–642 (LASRLQSDW) the chain is on the extracellular side. The chain crosses the membrane as a helical span at residues 643 to 664 (MLMLYFAHTHLTVTVTIGLLLI). Residues 665–1216 (PKFSHSSNNP…NEEVRLARKV (552 aa)) are Cytoplasmic-facing. A phosphoserine mark is found at S694, S705, and S708. Disordered stretches follow at residues 757-875 (RITE…ESVP) and 911-1000 (KEKT…HMKD). The span at 769–781 (CSKEDKDGGEHGS) shows a compositional bias: basic and acidic residues. A Glycyl lysine isopeptide (Lys-Gly) (interchain with G-Cter in ubiquitin) cross-link involves residue K774. A compositionally biased stretch (polar residues) spans 864–873 (EDSQAVSTES). Residue S866 is modified to Phosphoserine. The segment covering 926–944 (VEERAKAQKALPRERETNR) has biased composition (basic and acidic residues). Polar residues-rich tracts occupy residues 945-963 (KYSNSDNAETQDSAPPNSS) and 980-991 (QRANPTTANSDL). Phosphoserine is present on S947. The short motif at 1007–1011 (VCPWE) is the VCPWE motif 1 element. The segment at 1038-1072 (ERNPTFSLKEKSHPKPKAADLCQQSNPKSVDKAEV) is disordered. S1066 bears the Phosphoserine mark. A VCPWE motif 2 motif is present at residues 1072–1076 (VCPWE). The residue at position 1081 (S1081) is a Phosphoserine. The tract at residues 1128–1167 (SKVENENLNQLGEQEKKTSSSERNVPDSHNSSNNFQPPLM) is disordered. Basic and acidic residues predominate over residues 1140–1153 (EQEKKTSSSERNVP). Over residues 1154 to 1163 (DSHNSSNNFQ) the composition is skewed to polar residues. Positions 1172–1176 (VCPWE) match the VCPWE motif 3 motif.

It belongs to the G-protein coupled receptor 3 family. In terms of assembly, homodimer. Associates with the RGS7-GNB5 complex, promoting its localization to the cell membrane and regulating its GTPase activator activity. Interacts (via VCPWE motifs) with GNAO1. Interacts with GPC4. Interacts with EGFLAM.

It localises to the cell membrane. It is found in the postsynaptic cell membrane. The protein resides in the presynaptic cell membrane. The protein localises to the nucleus. In terms of biological role, metabotropic receptor for glycine that controls synapse formation and function in the brain. Acts as an atypical G-protein coupled receptor that recruits and regulates the RGS7-GNB5 complex instead of activating G proteins. In absence of glycine ligand, promotes the GTPase activator activity of RGS7, increasing the GTPase activity of G protein alpha subunits, thereby driving them into their inactive GDP-bound form. Glycine-binding changes the conformation of the intracellular surface, inhibiting the GTPase activator activity of the RGS7-GNB5 complex, promoting G protein alpha subunits into their active GTP-bound form and regulating cAMP levels. Also able to bind taurine, a compound closely related to glycine, but with a two-fold lower affinity. Glycine receptor-dependent regulation of cAMP controls key ion channels, kinases and neurotrophic factors involved in neuronal excitability and synaptic transmission. Plays a pivotal role in regulating mood and cognition via its ability to regulate neuronal excitability in L2/L3 pyramidal neurons of the prefrontal cortex. Also involved in spatial learning by regulating hippocampal CA1 neuronal excitability. Acts as a synaptic organizer in the hippocampus, required for proper mossy fiber-CA3 neurocircuitry establishment, structure and function: induces presynaptic differentiation in contacting axons via its interaction with GPC4. In addition to glycine, may also act as a receptor for osteocalcin (BGLAP) hormone: osteocalcin-binding initiates a signaling response that prevents neuronal apoptosis in the hippocampus and regulates the synthesis of neurotransmitters. This chain is Metabotropic glycine receptor (GPR158), found in Bos taurus (Bovine).